Here is a 328-residue protein sequence, read N- to C-terminus: Malate dehydrogenase (328 aa).

Position 12 to 18 (Gly-12 to Gly-18) interacts with NAD(+). Residues Arg-95 and Arg-101 each coordinate substrate. NAD(+) is bound by residues Asn-108, Gln-115, and Val-132–Asn-134. Asn-134 and Arg-165 together coordinate substrate. His-190 serves as the catalytic Proton acceptor.

It belongs to the LDH/MDH superfamily. MDH type 2 family.

It catalyses the reaction (S)-malate + NAD(+) = oxaloacetate + NADH + H(+). In terms of biological role, catalyzes the reversible oxidation of malate to oxaloacetate. The polypeptide is Malate dehydrogenase (Acidovorax ebreus (strain TPSY) (Diaphorobacter sp. (strain TPSY))).